The following is a 564-amino-acid chain: MARAMGPERRLLAIYTGGTIGMRSEGGVLVPGRGLAAVLKTLHMFHDEEYAQAHSLPEDTLVLPPASPDQRIIYTVLECQPLFDSSDMTITEWVQIAQTIERHYAQYQGFVVIHGTDTMAFAASVLSFMLENLQKPVVLTGAQVPIHALWSDGRENLLGALLMAGQYVIPEVCLFFQNQLFRGNRTTKVDARRFAAFCSPNLPPLATVGADVTINRELVRKACGKSHLVVHSSMEPDVGLLRLYPGIPASLVRTFLQPPLKGVVMETFGSGNGPTKPDLLQELRVAAEQGLIIVNCTHCLQGAVTSDYASGMAMAGAGIVSGFDMTSEAALAKLSYVLGQPGLSLNDRKKLLAKDLRGEMTLPATDVLLQDGMLGCRVAWLLSMNGSQEADTMKDVLLPGLALAAAHAGDLDTLQAFVELDRDLNLKDYSGQTPLHVAARRGHAAVVTMLLQRGADVDARNEDGQSPLLLAVRGRHQSVIGLLRAAGARLSPQELEDVGTELCRLASRGDSEGLRAWWQAGADLGQPDYDGHCALQVAEAAGNADVVALLQSFKDSVCAQPQPH.

The 347-residue stretch at 9 to 355 (RRLLAIYTGG…NDRKKLLAKD (347 aa)) folds into the Asparaginase/glutaminase domain. T19 (acyl-ester intermediate) is an active-site residue. Positions 41 to 350 (TLHMFHDEEY…PGLSLNDRKK (310 aa)) are asparaginase. Substrate-binding positions include 84 to 86 (DSS) and 116 to 117 (TD). ANK repeat units lie at residues 141 to 170 (GAQV…YVIP), 396 to 426 (VLLP…DLNL), 430 to 459 (SGQT…DVDA), 463 to 492 (DGQS…RLSP), and 530 to 559 (DGHC…SVCA). Phosphoserine is present on S478.

It in the N-terminal section; belongs to the asparaginase 1 family. As to quaternary structure, monomer.

It catalyses the reaction a 1-acyl-sn-glycero-3-phosphocholine + H2O = sn-glycerol 3-phosphocholine + a fatty acid + H(+). It carries out the reaction L-asparagine + H2O = L-aspartate + NH4(+). The enzyme catalyses a 1-O-alkyl-2-acetyl-sn-glycero-3-phosphocholine + H2O = a 1-O-alkyl-sn-glycero-3-phosphocholine + acetate + H(+). The catalysed reaction is 1-hexadecanoyl-sn-glycero-3-phosphocholine + H2O = sn-glycerol 3-phosphocholine + hexadecanoate + H(+). It catalyses the reaction 2 1-hexadecanoyl-sn-glycero-3-phosphocholine = 1,2-dihexadecanoyl-sn-glycero-3-phosphocholine + sn-glycerol 3-phosphocholine. It carries out the reaction 1-octadecanoyl-sn-glycero-3-phosphocholine + H2O = octadecanoate + sn-glycerol 3-phosphocholine + H(+). The enzyme catalyses 1-(9Z-octadecenoyl)-sn-glycero-3-phosphocholine + H2O = sn-glycerol 3-phosphocholine + (9Z)-octadecenoate + H(+). The catalysed reaction is 1-hexadecanoyl-sn-glycero-3-phosphoethanolamine + H2O = sn-glycero-3-phosphoethanolamine + hexadecanoate + H(+). It catalyses the reaction 1-(9Z-octadecenoyl)-sn-glycero-3-phosphoethanolamine + H2O = sn-glycero-3-phosphoethanolamine + (9Z)-octadecenoate + H(+). It carries out the reaction 1-hexadecanoyl-sn-glycero-3-phosphoethanolamine + 1-hexadecanoyl-sn-glycero-3-phosphocholine = 1,2-dihexadecanoyl-sn-glycero-3-phosphoethanolamine + sn-glycerol 3-phosphocholine. The enzyme catalyses 2-(5Z,8Z,11Z,14Z)-eicosatetraenoyl-sn-glycero-3-phosphocholine + H2O = sn-glycerol 3-phosphocholine + (5Z,8Z,11Z,14Z)-eicosatetraenoate + H(+). The catalysed reaction is 2-hexadecanoyl-sn-glycero-3-phosphocholine + H2O = sn-glycerol 3-phosphocholine + hexadecanoate + H(+). It catalyses the reaction 2 2-hexadecanoyl-sn-glycero-3-phosphocholine = 1,2-dihexadecanoyl-sn-glycero-3-phosphocholine + sn-glycerol 3-phosphocholine. It carries out the reaction 1-O-(9Z)-octadecenoyl-2-O-acetyl-sn-glycero-3-phosphocholine + H2O = 2-acetyl-sn-glycero-3-phosphocholine + (9Z)-octadecenoate + H(+). The enzyme catalyses a 1-acyl-sn-glycero-3-phospho-(1D-myo-inositol) + 1-hexadecanoyl-sn-glycero-3-phosphocholine = a 1-acyl-2-hexadecanoyl-sn-glycero-3-phospho-(1D-myo-inositol) + sn-glycerol 3-phosphocholine. The catalysed reaction is 2 2-(5Z,8Z,11Z,14Z)-eicosatetraenoyl-sn-glycero-3-phosphocholine = 1,2-di-(5Z,8Z,11Z,14Z-eicosatetraenoyl)-sn-glycero-3-phosphocholine + sn-glycerol 3-phosphocholine. Functionally, exhibits lysophospholipase, transacylase, PAF acetylhydrolase and asparaginase activities. Can catalyze three types of transacylation reactions: (1) acyl transfer from 1-acyl-sn-glycero-3-phosphocholine (1-acyl-GPC) to the sn-1(3) positions of glycerol and 2-acylglycerol (sn-1 to -1(3) transfer), (2) acyl transfer from 1-acyl-GPC to the sn-2 positions of 1-acyl-GPC, 1-acyl-sn-glycero-3-phosphoethanolamine (1-acyl-GPE), and other lysophospholipids (sn-1 to -2 transfer) and (3) acyl transfer from 2-acyl-GPC to the sn-1 position of 2-acyl-GPC and 2-acyl-GPE (sn-2 to -1 transfer). Mediates the synthesis of 1-arachidonoyl species of phospholipids by transferring the arachidonoyl residue from 2-arachidonoyl lysophospholipid to the sn-1 position of 2-acyl lysophospholipid. The sequence is that of 60 kDa lysophospholipase (Aspg) from Mus musculus (Mouse).